The sequence spans 668 residues: DNA ligase (668 aa).

NAD(+) contacts are provided by residues D37–D41, S86–M87, and E116. The active-site N6-AMP-lysine intermediate is K118. Positions 139, 173, 288, and 312 each coordinate NAD(+). Zn(2+) contacts are provided by C406, C409, C424, and C429. Residues A590–K668 form the BRCT domain.

The protein belongs to the NAD-dependent DNA ligase family. LigA subfamily. Mg(2+) serves as cofactor. Mn(2+) is required as a cofactor.

It carries out the reaction NAD(+) + (deoxyribonucleotide)n-3'-hydroxyl + 5'-phospho-(deoxyribonucleotide)m = (deoxyribonucleotide)n+m + AMP + beta-nicotinamide D-nucleotide.. Its function is as follows. DNA ligase that catalyzes the formation of phosphodiester linkages between 5'-phosphoryl and 3'-hydroxyl groups in double-stranded DNA using NAD as a coenzyme and as the energy source for the reaction. It is essential for DNA replication and repair of damaged DNA. This is DNA ligase from Lactobacillus gasseri (strain ATCC 33323 / DSM 20243 / BCRC 14619 / CIP 102991 / JCM 1131 / KCTC 3163 / NCIMB 11718 / NCTC 13722 / AM63).